Here is a 939-residue protein sequence, read N- to C-terminus: Valine--tRNA ligase (939 aa).

A 'HIGH' region motif is present at residues 45–55; the sequence is PNVTGTLHMGH. The 'KMSKS' region motif lies at 549 to 553; sequence KMSKS. Lysine 552 serves as a coordination point for ATP. Residues 876 to 939 are a coiled coil; that stretch reads AAETARLRKE…KIRVQLVKLA (64 aa).

This sequence belongs to the class-I aminoacyl-tRNA synthetase family. ValS type 1 subfamily. As to quaternary structure, monomer.

It localises to the cytoplasm. The catalysed reaction is tRNA(Val) + L-valine + ATP = L-valyl-tRNA(Val) + AMP + diphosphate. Its function is as follows. Catalyzes the attachment of valine to tRNA(Val). As ValRS can inadvertently accommodate and process structurally similar amino acids such as threonine, to avoid such errors, it has a 'posttransfer' editing activity that hydrolyzes mischarged Thr-tRNA(Val) in a tRNA-dependent manner. In Chromobacterium violaceum (strain ATCC 12472 / DSM 30191 / JCM 1249 / CCUG 213 / NBRC 12614 / NCIMB 9131 / NCTC 9757 / MK), this protein is Valine--tRNA ligase.